An 885-amino-acid polypeptide reads, in one-letter code: MENPQKPRELTRAFNHYNKHSGFLKKNLKETILFFREIRQNHSNTCAAAEPGQLSCISFPRQDEEYLQNVVSSAPYILILGQDCSARYQLLNCLLGERLLPLGPEAGGACGAEGGACRRRKLCFTHGRQTRLSLALPGQYELVHQLAAHCGRWDTVPRQDLEIQECEDPAQRLAELEITLHHTLLQEVKIMVLPCRNVQPLEEALEDCKRGILPIVLYAVSRESLSAQQLEDLQTLRESLPFPVCFIRVSDGGGGGALFTQLASLQLISASAGNCACGAPAAQSAGRMQGVLCDSLERLQRVLVPFTRQVLQNQQVEAATLLNTIHCRCLDLFIIQAFDMQRDLQITPRRLEYTREKEGELFCSLMAIANRKQEEMKEMIVETLSSMKEQLLEDAQNLDFTDIIMSSNGEPVSSKDIKVCISQIQDLIVNRLNQAVANKLTNSVDYLRESFVGTLERCLGSLEKSTPESCAHNVTSNHLKQILNAAYHVEVTFHSGSSVTRLFWEQIKQIIHRITWVNPPAITAEWKRKVAQDAIESLSAAKLAKSICSQFRTRLNSSHEAFAASLRQLEEGHTGRLERTEDLWLRVRKDHAPRLARLSLESRSLRDILLHGKPKLGRELGRGQYGVVYLCDSWAGRHPCALKSVVPPDDKHWNDLALEFHYTRSLPKHERLVNLHGSVIDHSYSGGSSIAVLLIMERLHRDLYTGLKAGLSLKERLLIALDVVEGIRFLHSQGLLHRDIKLKNVLLDKQNRAKITDLGFCKPEAMMSGSIVGTPIHMAPELFTGKYDNSVDVYAFGILFWYLCSGSVKLPEAFEKCASKDQLWTNVKKGCRPERLPVFDEECWQLMEACWNGDPSQRPLLGIVQPGLQSIMERLCGEKSLEDSN.

The region spanning 614–868 is the Protein kinase domain; the sequence is PKLGRELGRG…PLLGIVQPGL (255 aa). ATP is bound by residues 620 to 628 and Lys-643; that span reads LGRGQYGVV. Catalysis depends on Asp-739, which acts as the Proton acceptor.

Belongs to the protein kinase superfamily. Ser/Thr protein kinase family.

Its subcellular location is the cytoplasm. The protein resides in the cell membrane. It localises to the apical cell membrane. The protein localises to the basolateral cell membrane. It is found in the cell junction. It carries out the reaction L-seryl-[protein] + ATP = O-phospho-L-seryl-[protein] + ADP + H(+). The catalysed reaction is L-threonyl-[protein] + ATP = O-phospho-L-threonyl-[protein] + ADP + H(+). The enzyme catalyses L-tyrosyl-[protein] + ATP = O-phospho-L-tyrosyl-[protein] + ADP + H(+). May act as a positive regulator of ERK phosphorylation downstream of fibroblast growth factor-receptor activation. May induce both caspase-dependent apoptosis and caspase-independent cell death. Plays a role in the embryonic development. This chain is Dual serine/threonine and tyrosine protein kinase (dstyk), found in Danio rerio (Zebrafish).